The primary structure comprises 652 residues: MSQIHKHAIPANIADRCLINPEQYEAKYQQSINEPDTFWGEQGKILDWITPYKKVKNTSFAPGNVSIKWYEDGTLNLAANCLDRHLQENGDRTAIIWEGDDATQSKHISYRELHRDVCRFANTLLELGIKKGDVVAIYMPMVPEAAVAMLACARIGAVHSVIFGGFSPEAVAGRIIDSSSRLVITADEGVRAGRGIPLKKNVDDALKNPNVNSVEHVVVLKRTGGKVDWHEGRDLWWSDVIEKSSADHQPEEMNAEDPLFILYTSGSTGKPKGVLHTTGGYLVYAATTFKYVFDYHPDDIYWCTADVGWVTGHSYLLYGPLACGATTLMFEGVPNWPTPARMAQVVDKHQVTILYTAPTAIRALMAEGDKAIEGTDRSSLRILGSVGEPINPEAWEWYWKKIGNEKCPVVDTWWQTETGGFMITPLPGATELKAGSATRPFFGVQPALVDNEGHPQEGATEGNLVITDSWPGQARTLFGDHERFEQTYFSTFKNMYFSGDGARRDEDGYYWITGRVDDVLNVSGHRLGTAEIESALVSHPKIAEAAVVGIPHNIKGQAIYAYVTLNHGEDPSPELYTEVRNWVRKEIGPLATPDVLHWTDSLPKTRSGKIMRRILRKIAAGDTSNLGDTSTLADPGVVEKLLEEKQAIAMPS.

CoA is bound by residues 191-194 (RAGR), threonine 311, and asparagine 335. ATP is bound by residues 387–389 (GEP), 411–416 (DTWWQT), aspartate 500, and arginine 515. Serine 523 serves as a coordination point for CoA. Residue arginine 526 participates in ATP binding. Mg(2+) is bound by residues valine 537, histidine 539, and isoleucine 542. Arginine 584 lines the CoA pocket. N6-acetyllysine is present on lysine 609.

This sequence belongs to the ATP-dependent AMP-binding enzyme family. Mg(2+) is required as a cofactor. In terms of processing, acetylated. Deacetylation by the SIR2-homolog deacetylase activates the enzyme.

The catalysed reaction is acetate + ATP + CoA = acetyl-CoA + AMP + diphosphate. Functionally, catalyzes the conversion of acetate into acetyl-CoA (AcCoA), an essential intermediate at the junction of anabolic and catabolic pathways. Acs undergoes a two-step reaction. In the first half reaction, Acs combines acetate with ATP to form acetyl-adenylate (AcAMP) intermediate. In the second half reaction, it can then transfer the acetyl group from AcAMP to the sulfhydryl group of CoA, forming the product AcCoA. Enables the cell to use acetate during aerobic growth to generate energy via the TCA cycle, and biosynthetic compounds via the glyoxylate shunt. Acetylates CheY, the response regulator involved in flagellar movement and chemotaxis. This chain is Acetyl-coenzyme A synthetase, found in Citrobacter koseri (strain ATCC BAA-895 / CDC 4225-83 / SGSC4696).